Consider the following 725-residue polypeptide: Ribosomal RNA large subunit methyltransferase K/L (725 aa).

Residues 46 to 157 form the THUMP domain; the sequence is VGYRLCLWSR…KGQAVLSLDL (112 aa).

It belongs to the methyltransferase superfamily. RlmKL family.

The protein resides in the cytoplasm. It catalyses the reaction guanosine(2445) in 23S rRNA + S-adenosyl-L-methionine = N(2)-methylguanosine(2445) in 23S rRNA + S-adenosyl-L-homocysteine + H(+). The catalysed reaction is guanosine(2069) in 23S rRNA + S-adenosyl-L-methionine = N(2)-methylguanosine(2069) in 23S rRNA + S-adenosyl-L-homocysteine + H(+). In terms of biological role, specifically methylates the guanine in position 2445 (m2G2445) and the guanine in position 2069 (m7G2069) of 23S rRNA. This Stutzerimonas stutzeri (strain A1501) (Pseudomonas stutzeri) protein is Ribosomal RNA large subunit methyltransferase K/L.